The chain runs to 572 residues: NADH-ubiquinone oxidoreductase chain 5 (572 aa).

A run of 17 helical transmembrane segments spans residues 6 to 26, 44 to 64, 86 to 106, 107 to 127, 147 to 167, 179 to 201, 208 to 230, 234 to 254, 268 to 288, 291 to 311, 337 to 357, 372 to 394, 422 to 442, 454 to 474, 479 to 499, 524 to 544, and 552 to 572; these read FFFL…YLMI, VVMT…VMYI, IMIV…PNLI, SILL…IYYQ, VAIL…YIYY, IITL…SSWL, PTPV…LLIR, MLMV…TMFM, IIAL…SMGY, LAFF…MCAG, SICF…AGFY, NFFI…FRLF, IGLL…IFPV, FLTL…SDFV, LFSL…FMPF, WGEL…INYI, and FKVY…LFFL.

Belongs to the complex I subunit 5 family.

It localises to the mitochondrion inner membrane. It catalyses the reaction a ubiquinone + NADH + 5 H(+)(in) = a ubiquinol + NAD(+) + 4 H(+)(out). Its function is as follows. Core subunit of the mitochondrial membrane respiratory chain NADH dehydrogenase (Complex I) that is believed to belong to the minimal assembly required for catalysis. Complex I functions in the transfer of electrons from NADH to the respiratory chain. The immediate electron acceptor for the enzyme is believed to be ubiquinone. In Locusta migratoria (Migratory locust), this protein is NADH-ubiquinone oxidoreductase chain 5 (ND5).